Here is a 500-residue protein sequence, read N- to C-terminus: Glutathione reductase (500 aa).

Ser12 and Gly13 together coordinate FAD. Ser12 lines the glutathione pocket. Arg19 provides a ligand contact to glutathione. FAD contacts are provided by Glu32, Thr39, Cys40, and Lys48. A disulfide bridge links Cys40 with Cys45. Tyr95 contributes to the glutathione binding site. Ala111 provides a ligand contact to FAD. Residues Ile187, Glu190, Arg207, Arg213, and Gly272 each coordinate NADP(+). Asp312 and Thr354 together coordinate FAD. Arg362 serves as a coordination point for glutathione. Residue Val384 coordinates NADP(+). His485 provides a ligand contact to FAD. The active-site Proton acceptor is His485.

The protein belongs to the class-I pyridine nucleotide-disulfide oxidoreductase family. Homodimer. The cofactor is FAD.

Its subcellular location is the cytoplasm. The catalysed reaction is 2 glutathione + NADP(+) = glutathione disulfide + NADPH + H(+). Functionally, catalyzes the reduction of glutathione disulfide (GSSG) to reduced glutathione (GSH). Constitutes the major mechanism to maintain a high GSH:GSSG ratio in the cytosol. In Plasmodium falciparum (isolate K1 / Thailand), this protein is Glutathione reductase.